A 460-amino-acid polypeptide reads, in one-letter code: uncharacterized protein (460 aa).

The 59-residue stretch at 6–64 folds into the TRAM domain; it reads PVKKNNDYEIYIDDFGNMGEGIGKIDNFTVFVKDAVKGEKVRAKIIKVNKSFAIGKLID. Residues C77, C83, C86, and C166 each contribute to the [4Fe-4S] cluster site. S-adenosyl-L-methionine contacts are provided by Q290, Y319, E340, and D388. C415 (nucleophile) is an active-site residue.

This sequence belongs to the class I-like SAM-binding methyltransferase superfamily. RNA M5U methyltransferase family.

This is an uncharacterized protein from Clostridium acetobutylicum (strain ATCC 824 / DSM 792 / JCM 1419 / IAM 19013 / LMG 5710 / NBRC 13948 / NRRL B-527 / VKM B-1787 / 2291 / W).